The primary structure comprises 486 residues: GDP-Man:Man(3)GlcNAc(2)-PP-Dol alpha-1,2-mannosyltransferase (486 aa).

The Lumenal portion of the chain corresponds to M1 to A16. The helical transmembrane segment at L17 to I37 threads the bilayer. At C38–K229 the chain is on the cytoplasmic side. Positions L230–I250 form an intramembrane region, helical. The Cytoplasmic segment spans residues M251 to H393. An intramembrane region (helical) is located at residues F394–G414. Residues G415 to K486 lie on the Cytoplasmic side of the membrane.

Belongs to the glycosyltransferase group 1 family. Glycosyltransferase 4 subfamily.

The protein resides in the endoplasmic reticulum membrane. The enzyme catalyses an alpha-D-Man-(1-&gt;3)-[alpha-D-Man-(1-&gt;6)]-beta-D-Man-(1-&gt;4)-beta-D-GlcNAc-(1-&gt;4)-alpha-D-GlcNAc-diphospho-di-trans,poly-cis-dolichol + 2 GDP-alpha-D-mannose = an alpha-D-Man-(1-&gt;2)-alpha-D-Man-(1-&gt;2)-alpha-D-Man-(1-&gt;3)-[alpha-D-Man-(1-&gt;6)]-beta-D-Man-(1-&gt;4)-beta-D-GlcNAc-(1-&gt;4)-alpha-D-GlcNAc-diphospho-di-trans,poly-cis-dolichol + 2 GDP + 2 H(+). It functions in the pathway protein modification; protein glycosylation. Its function is as follows. GDP-Man:Man(3)GlcNAc(2)-PP-Dol alpha-1,2-mannosyltransferase that operates in the biosynthetic pathway of dolichol-linked oligosaccharides, the glycan precursors employed in protein asparagine (N)-glycosylation. The assembly of dolichol-linked oligosaccharides begins on the cytosolic side of the endoplasmic reticulum membrane and finishes in its lumen. The sequential addition of sugars to dolichol pyrophosphate produces dolichol-linked oligosaccharides containing fourteen sugars, including two GlcNAcs, nine mannoses and three glucoses. Once assembled, the oligosaccharide is transferred from the lipid to nascent proteins by oligosaccharyltransferases. Catalyzes, on the cytoplasmic face of the endoplasmic reticulum, the addition of the fourth and fifth mannose residues to the dolichol-linked oligosaccharide chain, to produce Man(5)GlcNAc(2)-PP-dolichol core oligosaccharide. Man(5)GlcNAc(2)-PP-dolichol is a substrate for ALG3, the following enzyme in the biosynthetic pathway. The polypeptide is GDP-Man:Man(3)GlcNAc(2)-PP-Dol alpha-1,2-mannosyltransferase (alg11) (Xenopus laevis (African clawed frog)).